Consider the following 539-residue polypeptide: Phosphoenolpyruvate carboxykinase (ATP) (539 aa).

Substrate contacts are provided by Arg-64, Tyr-206, and Lys-212. ATP-binding positions include Lys-212, His-231, and 247–255 (GLSGTGKTT). Mn(2+) is bound by residues Lys-212 and His-231. Asp-268 contacts Mn(2+). ATP contacts are provided by residues Glu-296, Arg-332, 448 to 449 (RI), and Thr-454. Arg-332 contacts substrate.

Belongs to the phosphoenolpyruvate carboxykinase (ATP) family. In terms of assembly, monomer. The cofactor is Mn(2+).

The protein localises to the cytoplasm. The catalysed reaction is oxaloacetate + ATP = phosphoenolpyruvate + ADP + CO2. It functions in the pathway carbohydrate biosynthesis; gluconeogenesis. In terms of biological role, involved in the gluconeogenesis. Catalyzes the conversion of oxaloacetate (OAA) to phosphoenolpyruvate (PEP) through direct phosphoryl transfer between the nucleoside triphosphate and OAA. This is Phosphoenolpyruvate carboxykinase (ATP) from Erwinia tasmaniensis (strain DSM 17950 / CFBP 7177 / CIP 109463 / NCPPB 4357 / Et1/99).